We begin with the raw amino-acid sequence, 188 residues long: Threonylcarbamoyl-AMP synthase (188 aa).

Residues 3-188 enclose the YrdC-like domain; sequence QLHPSEIKDI…RSGKILRNGQ (186 aa).

The protein belongs to the SUA5 family. TsaC subfamily.

The protein localises to the cytoplasm. It catalyses the reaction L-threonine + hydrogencarbonate + ATP = L-threonylcarbamoyladenylate + diphosphate + H2O. Its function is as follows. Required for the formation of a threonylcarbamoyl group on adenosine at position 37 (t(6)A37) in tRNAs that read codons beginning with adenine. Catalyzes the conversion of L-threonine, HCO(3)(-)/CO(2) and ATP to give threonylcarbamoyl-AMP (TC-AMP) as the acyladenylate intermediate, with the release of diphosphate. This Shewanella sp. (strain MR-4) protein is Threonylcarbamoyl-AMP synthase.